We begin with the raw amino-acid sequence, 152 residues long: MAPSRKNKVVKEEVQVSLGPQVRDGEVVFGVAHIYASFNDTFVHVTDLSGKETISRVTGGMKVKADRDEASPYAAMLAAQDVAEKCKSLGITALHIKLRATGGNRTKTPGPGAQSALRALARSSMKIGRIEDVTPIPSDSTRRKGGRRGRRL.

Residues 131-152 are disordered; it reads EDVTPIPSDSTRRKGGRRGRRL. Over residues 143–152 the composition is skewed to basic residues; sequence RKGGRRGRRL.

It belongs to the universal ribosomal protein uS11 family.

In Anopheles gambiae (African malaria mosquito), this protein is Small ribosomal subunit protein uS11A.